Here is a 640-residue protein sequence, read N- to C-terminus: Threonine--tRNA ligase (640 aa).

Residues 1 to 61 (MPIITLPDGS…DHDATLQIIT (61 aa)) form the TGS domain. The tract at residues 242–533 (DHRKLGKRLD…LIEHYEGAFP (292 aa)) is catalytic. C333, H384, and H510 together coordinate Zn(2+).

This sequence belongs to the class-II aminoacyl-tRNA synthetase family. As to quaternary structure, homodimer. The cofactor is Zn(2+).

It is found in the cytoplasm. It catalyses the reaction tRNA(Thr) + L-threonine + ATP = L-threonyl-tRNA(Thr) + AMP + diphosphate + H(+). In terms of biological role, catalyzes the attachment of threonine to tRNA(Thr) in a two-step reaction: L-threonine is first activated by ATP to form Thr-AMP and then transferred to the acceptor end of tRNA(Thr). Also edits incorrectly charged L-seryl-tRNA(Thr). The chain is Threonine--tRNA ligase from Azotobacter vinelandii (strain DJ / ATCC BAA-1303).